We begin with the raw amino-acid sequence, 309 residues long: Bombesin receptor-activated protein C6orf89 homolog (309 aa).

Over 1 to 59 (MGSSLSEPCIYDKLSESIDILRQSGYRYGMSEREIEKFIKQVLETNEPRREPPQFPILR) the chain is Cytoplasmic. The chain crosses the membrane as a helical span at residues 60–80 (ATVKFVVAVGVVLMAVLVFTY). The Extracellular segment spans residues 81–309 (PQSPVLMGSV…QDVQCDSAVL (229 aa)).

As to quaternary structure, homodimer.

The protein localises to the golgi apparatus membrane. It is found in the cytoplasm. Exhibits histone deacetylase (HDAC) enhancer properties. May play a role in progression through the cell cycle. In Danio rerio (Zebrafish), this protein is Bombesin receptor-activated protein C6orf89 homolog.